We begin with the raw amino-acid sequence, 469 residues long: Aspartyl/glutamyl-tRNA(Asn/Gln) amidotransferase subunit B (469 aa).

This sequence belongs to the GatB/GatE family. GatB subfamily. In terms of assembly, heterotrimer of A, B and C subunits.

The enzyme catalyses L-glutamyl-tRNA(Gln) + L-glutamine + ATP + H2O = L-glutaminyl-tRNA(Gln) + L-glutamate + ADP + phosphate + H(+). The catalysed reaction is L-aspartyl-tRNA(Asn) + L-glutamine + ATP + H2O = L-asparaginyl-tRNA(Asn) + L-glutamate + ADP + phosphate + 2 H(+). In terms of biological role, allows the formation of correctly charged Asn-tRNA(Asn) or Gln-tRNA(Gln) through the transamidation of misacylated Asp-tRNA(Asn) or Glu-tRNA(Gln) in organisms which lack either or both of asparaginyl-tRNA or glutaminyl-tRNA synthetases. The reaction takes place in the presence of glutamine and ATP through an activated phospho-Asp-tRNA(Asn) or phospho-Glu-tRNA(Gln). This chain is Aspartyl/glutamyl-tRNA(Asn/Gln) amidotransferase subunit B, found in Methanococcus maripaludis (strain C5 / ATCC BAA-1333).